A 744-amino-acid polypeptide reads, in one-letter code: Eukaryotic translation initiation factor 3 subunit B (744 aa).

The segment at 1 to 20 is disordered; it reads MAPSFDHLPDPEEDEYDEEE. Over residues 11–20 the composition is skewed to acidic residues; sequence PEEDEYDEEE. The 87-residue stretch at 40–126 folds into the RRM domain; that stretch reads TFVVIDGLPE…HTLRVNKLTD (87 aa). 4 WD repeats span residues 193–232, 234–290, 307–348, and 577–622; these read DRQHWTESFVQWSPQGTFLTSMHQQGVQLWGGPSWTRQKR, AHPF…PLRS, PVKR…LLDK, and ADHY…LREE. The span at 699–714 shows a compositional bias: basic and acidic residues; it reads EREDAGLPRDPLEPLK. The tract at residues 699–722 is disordered; it reads EREDAGLPRDPLEPLKSKMASGDE.

Belongs to the eIF-3 subunit B family. In terms of assembly, component of the eukaryotic translation initiation factor 3 (eIF-3) complex.

Its subcellular location is the cytoplasm. In terms of biological role, RNA-binding component of the eukaryotic translation initiation factor 3 (eIF-3) complex, which is involved in protein synthesis of a specialized repertoire of mRNAs and, together with other initiation factors, stimulates binding of mRNA and methionyl-tRNAi to the 40S ribosome. The eIF-3 complex specifically targets and initiates translation of a subset of mRNAs involved in cell proliferation. The sequence is that of Eukaryotic translation initiation factor 3 subunit B (prt1) from Sclerotinia sclerotiorum (strain ATCC 18683 / 1980 / Ss-1) (White mold).